A 796-amino-acid chain; its full sequence is MLRGGRRGQLGWHSWAAGPGSLLAWLILASAGAAPCPDACCPHGSSGLRCTRDGALDSLHHLPGAENLTELYIENQQHLQHLELRDLRGLGELRNLTIVKSGLRFVAPDAFHFTPRLSRLNLSFNALESLSWKTVQGLSLQELVLSGNPLHCSCALRWLQRWEEEGLGGVPEQKLQCHGQGPLAHMPNASCGVPTLKVQVPNASVDVGDDVLLRCQVEGRGLEQAGWILTELEQSATVMKSGGLPSLGLTLANVTSDLNRKNVTCWAENDVGRAEVSVQVNVSFPASVQLHTAVEMHHWCIPFSVDGQPAPSLRWLFNGSVLNETSFIFTEFLEPAANETVRHGCLRLNQPTHVNNGNYTLLAANPFGQASASIMAAFMDNPFEFNPEDPIPVSFSPVDTNSTSGDPVEKKDETPFGVSVAVGLAVFACLFLSTLLLVLNKCGRRNKFGINRPAVLAPEDGLAMSLHFMTLGGSSLSPTEGKGSGLQGHIIENPQYFSDACVHHIKRRDIVLKWELGEGAFGKVFLAECHNLLPEQDKMLVAVKALKEASESARQDFQREAELLTMLQHQHIVRFFGVCTEGRPLLMVFEYMRHGDLNRFLRSHGPDAKLLAGGEDVAPGPLGLGQLLAVASQVAAGMVYLAGLHFVHRDLATRNCLVGQGLVVKIGDFGMSRDIYSTDYYRVGGRTMLPIRWMPPESILYRKFTTESDVWSFGVVLWEIFTYGKQPWYQLSNTEAIDCITQGRELERPRACPPEVYAIMRGCWQREPQQRHSIKDVHARLQALAQAPPVYLDVLG.

Residues 1–32 (MLRGGRRGQLGWHSWAAGPGSLLAWLILASAG) form the signal peptide. Over 33–423 (AAPCPDACCP…TPFGVSVAVG (391 aa)) the chain is Extracellular. Cystine bridges form between Cys36–Cys41 and Cys40–Cys50. N-linked (GlcNAc...) asparagine glycosylation is found at Asn67, Asn95, Asn121, Asn188, Asn202, Asn253, Asn262, Asn281, Asn318, Asn323, Asn338, Asn358, and Asn401. 2 LRR repeats span residues 90-113 (LGEL…AFHF) and 116-137 (RLSR…TVQG). Residues 148–193 (NPLHCSCALRWLQRWEEEGLGGVPEQKLQCHGQGPLAHMPNASCGV) form the LRRCT domain. An intrachain disulfide couples Cys154 to Cys191. Ig-like C2-type domains are found at residues 194–283 (PTLK…VNVS) and 299–365 (WCIP…LAAN). A disulfide bridge connects residues Cys215 and Cys265. A disulfide bridge connects residues Cys300 and Cys345. Residues 424–439 (LAVFACLFLSTLLLVL) form a helical membrane-spanning segment. Residues 440 to 796 (NKCGRRNKFG…APPVYLDVLG (357 aa)) lie on the Cytoplasmic side of the membrane. Positions 469-490 (MTLGGSSLSPTEGKGSGLQGHI) are interaction with SQSTM1. Tyr496 is subject to Phosphotyrosine; by autocatalysis. The Protein kinase domain maps to 510–781 (IVLKWELGEG…HSIKDVHARL (272 aa)). 516–524 (LGEGAFGKV) is an ATP binding site. A DXXLL motif is present at residues 537 to 541 (DKMLV). Position 544 (Lys544) interacts with ATP. A DXXLL motif is present at residues 607 to 611 (DAKLL). Asp650 (proton acceptor) is an active-site residue. Phosphotyrosine; by autocatalysis occurs at positions 676, 680, 681, and 791.

Belongs to the protein kinase superfamily. Tyr protein kinase family. Insulin receptor subfamily. Exists in a dynamic equilibrium between monomeric (low affinity) and dimeric (high affinity) structures. Homodimerization is induced by binding of a NGF dimer. Interacts with SQSTM1; bridges NTRK1 to NGFR. Forms a ternary complex with NGFR and KIDINS220; this complex is affected by the expression levels of KIDINS220 and an increase in KIDINS220 expression leads to a decreased association of NGFR and NTRK1. Interacts with SH2D1A; regulates NTRK1. Interacts (phosphorylated upon activation by NGF) with SHC1; mediates SHC1 phosphorylation and activation. Interacts (phosphorylated upon activation by NGF) with PLCG1; mediates PLCG1 phosphorylation and activation. Interacts (phosphorylated) with SH2B1 and SH2B2. Interacts with GRB2. Interacts with PIK3R1. Interacts with FRS2. Interacts with SORT1; may regulate NTRK1 anterograde axonal transport. Interacts with RAB7A. Found in a complex, at least composed of KIDINS220, MAGI2, NTRK1 and RAPGEF2; the complex is mainly formed at late endosomes in a nerve growth factor (NGF)-dependent manner. Interacts with RAPGEF2; the interaction is strengthened after NGF stimulation. Interacts with PTPRS. Interacts with USP36; USP36 does not deubiquitinate NTRK1. Interacts with GGA3. Interacts with TSPAN1; this interaction promotes NTRK1 stability. Post-translationally, ligand-mediated autophosphorylation. Interaction with SQSTM1 is phosphotyrosine-dependent. Autophosphorylation at Tyr-496 mediates interaction and phosphorylation of SHC1. In terms of processing, N-glycosylated. Isoform TrkA-I and isoform TrkA-II are N-glycosylated. Ubiquitinated. Undergoes polyubiquitination upon activation; regulated by NGFR. Ubiquitination by NEDD4L leads to degradation. Ubiquitination regulates the internalization of the receptor. In terms of tissue distribution, isoform TrkA-I is found in most non-neuronal tissues. Isoform TrkA-II is primarily expressed in neuronal cells. TrkA-III is specifically expressed by pluripotent neural stem and neural crest progenitors.

Its subcellular location is the cell membrane. The protein localises to the early endosome membrane. It localises to the late endosome membrane. It is found in the recycling endosome membrane. It catalyses the reaction L-tyrosyl-[protein] + ATP = O-phospho-L-tyrosyl-[protein] + ADP + H(+). The pro-survival signaling effect of NTRK1 in neurons requires its endocytosis into signaling early endosomes and its retrograde axonal transport. This is regulated by different proteins including CFL1, RAC1 and SORT1. NTF3 is unable to induce this signaling probably due to the lability of the NTF3-NTRK1 complex in endosomes. SH2D1A inhibits the autophosphorylation of the receptor, and alters the recruitment and activation of downstream effectors and signaling cascades. Regulated by NGFR. Functionally, receptor tyrosine kinase involved in the development and the maturation of the central and peripheral nervous systems through regulation of proliferation, differentiation and survival of sympathetic and nervous neurons. High affinity receptor for NGF which is its primary ligand. Can also bind and be activated by NTF3/neurotrophin-3. However, NTF3 only supports axonal extension through NTRK1 but has no effect on neuron survival. Upon dimeric NGF ligand-binding, undergoes homodimerization, autophosphorylation and activation. Recruits, phosphorylates and/or activates several downstream effectors including SHC1, FRS2, SH2B1, SH2B2 and PLCG1 that regulate distinct overlapping signaling cascades driving cell survival and differentiation. Through SHC1 and FRS2 activates a GRB2-Ras-MAPK cascade that regulates cell differentiation and survival. Through PLCG1 controls NF-Kappa-B activation and the transcription of genes involved in cell survival. Through SHC1 and SH2B1 controls a Ras-PI3 kinase-AKT1 signaling cascade that is also regulating survival. In absence of ligand and activation, may promote cell death, making the survival of neurons dependent on trophic factors. Resistant to NGF, it constitutively activates AKT1 and NF-kappa-B and is unable to activate the Ras-MAPK signaling cascade. Antagonizes the anti-proliferative NGF-NTRK1 signaling that promotes neuronal precursors differentiation. Isoform TrkA-III promotes angiogenesis and has oncogenic activity when overexpressed. The polypeptide is High affinity nerve growth factor receptor (NTRK1) (Homo sapiens (Human)).